We begin with the raw amino-acid sequence, 442 residues long: MDQDGEKRVRAKQSDDEVDWLRDLPESLLCHILLNLPTKDVVKTSVLSSKWRNLWRLVPGLDLDSSDFTENNTFVSFIDRFMSFHSDLYLKKFKLRFFCNLNGDEVSENAHIARWINDVVKRKVHNLDLTWGAVEIPPILYLCNSLVSLKLCGVTLPNLELTSLPCVKVIVLEWVKFANDLALEMLISGCLVLESLTLCRRPNDNVKILRVSSQSLLRFSYNGSSYKGLHDDLVLEINAPKLKILKLFSHQLTTSFIRNTSSSIVEADINIGLGKKFDPKDLPKRNVICNFLAGISSVKNLFIAPCTLEVIYDYSRCEPLPLFCNLSYLSVDFYNNSWEILPIFLESCPNLKSLVVGSITSPKRRTSVLSGPRRLLSSLEYVEIESPLTGEVFEMKLVSYLLENSPILKKLTINLDDSSRKKAECELLTIPRRSTSCQVVVL.

Residues 18–64 (VDWLRDLPESLLCHILLNLPTKDVVKTSVLSSKWRNLWRLVPGLDLD) form the F-box domain. The 53-residue stretch at 363–415 (KRRTSVLSGPRRLLSSLEYVEIESPLTGEVFEMKLVSYLLENSPILKKLTINL) folds into the FBD domain.

The protein is FBD-associated F-box protein At1g66310 of Arabidopsis thaliana (Mouse-ear cress).